The following is a 281-amino-acid chain: Pantothenate synthetase (281 aa).

30 to 37 (MGNLHQGH) lines the ATP pocket. Histidine 37 acts as the Proton donor in catalysis. Glutamine 61 contributes to the (R)-pantoate binding site. Glutamine 61 provides a ligand contact to beta-alanine. 149 to 152 (GRKD) serves as a coordination point for ATP. Residue glutamine 155 coordinates (R)-pantoate. ATP contacts are provided by residues isoleucine 178 and 186-189 (MSSR).

It belongs to the pantothenate synthetase family. As to quaternary structure, homodimer.

It localises to the cytoplasm. The enzyme catalyses (R)-pantoate + beta-alanine + ATP = (R)-pantothenate + AMP + diphosphate + H(+). It participates in cofactor biosynthesis; (R)-pantothenate biosynthesis; (R)-pantothenate from (R)-pantoate and beta-alanine: step 1/1. In terms of biological role, catalyzes the condensation of pantoate with beta-alanine in an ATP-dependent reaction via a pantoyl-adenylate intermediate. The chain is Pantothenate synthetase from Shewanella denitrificans (strain OS217 / ATCC BAA-1090 / DSM 15013).